Here is a 558-residue protein sequence, read N- to C-terminus: Acid-sensing ion channel 4-B (558 aa).

At 1–71 (MPIEFVCKIK…TSERLGFRQT (71 aa)) the chain is on the cytoplasmic side. Residues 72–92 (LWGLALLVSLGLFLYQATWSA) form a helical membrane-spanning segment. The Extracellular portion of the chain corresponds to 93-433 (ATYLERPHLA…ETIEQKKAYD (341 aa)). 2 disulfide bridges follow: Cys-120–Cys-204 and Cys-182–Cys-189. 5 N-linked (GlcNAc...) asparagine glycosylation sites follow: Asn-140, Asn-183, Asn-188, Asn-210, and Asn-245. 5 disulfides stabilise this stretch: Cys-298/Cys-373, Cys-317/Cys-369, Cys-321/Cys-367, Cys-330/Cys-351, and Cys-332/Cys-344. The N-linked (GlcNAc...) asparagine glycan is linked to Asn-374. The chain crosses the membrane as a helical span at residues 434 to 454 (IAGLLGDIGGQMGLFIGASIL). The GAS motif; ion selectivity filter motif lies at 450–452 (GAS). At 455–558 (TILEILDYIY…QQAVQQDFAC (104 aa)) the chain is on the cytoplasmic side.

It belongs to the amiloride-sensitive sodium channel (TC 1.A.6) family. ASIC4 subfamily. Homotrimer. Heterotrimer; with other ASIC proteins producing functional channels. In terms of tissue distribution, expressed in central nervous system.

The protein resides in the cell membrane. The enzyme catalyses Na(+)(in) = Na(+)(out). Its function is as follows. Does not exhibit measurable stand-alone pH-gated sodium channel activity but may form pH-gated heterotrimeric sodium channels. The polypeptide is Acid-sensing ion channel 4-B (Danio rerio (Zebrafish)).